The chain runs to 262 residues: 2-oxo-tetronate isomerase (262 aa).

The active-site Proton donor/acceptor is glutamate 143. Mg(2+) is bound by residues glutamate 143, aspartate 178, glutamine 204, and glutamate 240. Glutamate 240 (proton donor/acceptor) is an active-site residue.

It belongs to the hyi family. OtnI subfamily.

It catalyses the reaction 2-dehydro-L-erythronate = 3-dehydro-L-erythronate. The enzyme catalyses 2-dehydro-D-erythronate = 3-dehydro-D-erythronate. In terms of biological role, catalyzes the isomerization of 2-oxo-tetronate to 3-oxo-tetronate. The chain is 2-oxo-tetronate isomerase from Pectobacterium atrosepticum (strain SCRI 1043 / ATCC BAA-672) (Erwinia carotovora subsp. atroseptica).